Here is a 488-residue protein sequence, read N- to C-terminus: Malonate-semialdehyde dehydrogenase (488 aa).

NAD(+)-binding residues include Ala150, Phe152, Lys176, Glu179, Arg180, Ser229, and Thr251. Cys284 acts as the Nucleophile in catalysis. Glu382 lines the NAD(+) pocket.

Belongs to the aldehyde dehydrogenase family. IolA subfamily. As to quaternary structure, homotetramer.

The enzyme catalyses 3-oxopropanoate + NAD(+) + CoA + H2O = hydrogencarbonate + acetyl-CoA + NADH + H(+). It catalyses the reaction 2-methyl-3-oxopropanoate + NAD(+) + CoA + H2O = propanoyl-CoA + hydrogencarbonate + NADH + H(+). Its pathway is polyol metabolism; myo-inositol degradation into acetyl-CoA; acetyl-CoA from myo-inositol: step 7/7. Functionally, catalyzes the oxidation of malonate semialdehyde (MSA) and methylmalonate semialdehyde (MMSA) into acetyl-CoA and propanoyl-CoA, respectively. Is involved in a myo-inositol catabolic pathway. Bicarbonate, and not CO2, is the end-product of the enzymatic reaction. The protein is Malonate-semialdehyde dehydrogenase of Listeria monocytogenes serotype 4a (strain HCC23).